The primary structure comprises 184 residues: Chaperone protein dnaJ 72 (184 aa).

Residues 3 to 73 (DHYQVLGVTR…LKRASYNAGS (71 aa)) form the J domain. A helical transmembrane segment spans residues 133–150 (FLLNLALAGGLYFAFTAI).

The protein belongs to the DnaJ family. C/III subfamily.

It is found in the membrane. Its function is as follows. Plays a continuous role in plant development probably in the structural organization of compartments. In Arabidopsis thaliana (Mouse-ear cress), this protein is Chaperone protein dnaJ 72 (ATJ72).